We begin with the raw amino-acid sequence, 146 residues long: 3-hydroxyacyl-[acyl-carrier-protein] dehydratase FabZ (146 aa).

The active site involves His-49.

The protein belongs to the thioester dehydratase family. FabZ subfamily.

It localises to the cytoplasm. It catalyses the reaction a (3R)-hydroxyacyl-[ACP] = a (2E)-enoyl-[ACP] + H2O. In terms of biological role, involved in unsaturated fatty acids biosynthesis. Catalyzes the dehydration of short chain beta-hydroxyacyl-ACPs and long chain saturated and unsaturated beta-hydroxyacyl-ACPs. This chain is 3-hydroxyacyl-[acyl-carrier-protein] dehydratase FabZ, found in Pseudomonas putida (strain ATCC 700007 / DSM 6899 / JCM 31910 / BCRC 17059 / LMG 24140 / F1).